The following is a 132-amino-acid chain: U-scoloptoxin(11)-Sa1a (132 aa).

The first 19 residues, 1 to 19, serve as a signal peptide directing secretion; sequence MIRFFAFVLFFATQELILC.

It belongs to the scoloptoxin-11 family. In terms of processing, contains 5 disulfide bonds. Expressed by the venom gland.

The protein resides in the secreted. The sequence is that of U-scoloptoxin(11)-Sa1a from Scolopendra alternans (Florida Keys giant centipede).